The primary structure comprises 471 residues: ATP synthase subunit beta (471 aa).

Residue 153-160 (GGAGVGKT) participates in ATP binding.

It belongs to the ATPase alpha/beta chains family. F-type ATPases have 2 components, CF(1) - the catalytic core - and CF(0) - the membrane proton channel. CF(1) has five subunits: alpha(3), beta(3), gamma(1), delta(1), epsilon(1). CF(0) has four main subunits: a(1), b(1), b'(1) and c(9-12).

It is found in the cell membrane. The enzyme catalyses ATP + H2O + 4 H(+)(in) = ADP + phosphate + 5 H(+)(out). Its function is as follows. Produces ATP from ADP in the presence of a proton gradient across the membrane. The catalytic sites are hosted primarily by the beta subunits. The polypeptide is ATP synthase subunit beta (Chloroflexus aggregans (strain MD-66 / DSM 9485)).